A 1381-amino-acid polypeptide reads, in one-letter code: DNA-directed RNA polymerase subunit beta (1381 aa).

The protein belongs to the RNA polymerase beta chain family. In terms of assembly, the RNAP catalytic core consists of 2 alpha, 1 beta, 1 beta' and 1 omega subunit. When a sigma factor is associated with the core the holoenzyme is formed, which can initiate transcription.

It carries out the reaction RNA(n) + a ribonucleoside 5'-triphosphate = RNA(n+1) + diphosphate. DNA-dependent RNA polymerase catalyzes the transcription of DNA into RNA using the four ribonucleoside triphosphates as substrates. This is DNA-directed RNA polymerase subunit beta from Sulfurimonas denitrificans (strain ATCC 33889 / DSM 1251) (Thiomicrospira denitrificans (strain ATCC 33889 / DSM 1251)).